Consider the following 231-residue polypeptide: Venom allergen 3 homolog (231 aa).

Positions 1–21 (MSSCMLFFTVIIAGVFMGTIA) are cleaved as a signal peptide. Intrachain disulfides connect C25-C40, C30-C124, and C51-C117. An SCP domain is found at 68 to 215 (VTLHNQLRRK…WNQQYLVCNY (148 aa)). N-linked (GlcNAc...) asparagine glycosylation occurs at N145. C196 and C213 are oxidised to a cystine.

The protein belongs to the CRISP family. As to expression, expressed by the venom gland.

The protein resides in the secreted. This chain is Venom allergen 3 homolog, found in Dinoponera quadriceps (South American ant).